A 44-amino-acid polypeptide reads, in one-letter code: Conotoxin Cl9a (44 aa).

Residues Glu-7, Glu-8, and Glu-24 each carry the 4-carboxyglutamate modification. Intrachain disulfides connect Cys-9–Cys-33, Cys-15–Cys-40, and Cys-23–Cys-42.

In terms of tissue distribution, expressed by the venom duct.

The protein resides in the secreted. The sequence is that of Conotoxin Cl9a from Californiconus californicus (California cone).